The following is a 221-amino-acid chain: Ribosomal RNA large subunit methyltransferase E (221 aa).

The S-adenosyl-L-methionine site is built by Gly60, Trp62, Asp89, Asp105, and Asp134. Lys174 (proton acceptor) is an active-site residue.

This sequence belongs to the class I-like SAM-binding methyltransferase superfamily. RNA methyltransferase RlmE family.

It is found in the cytoplasm. It carries out the reaction uridine(2552) in 23S rRNA + S-adenosyl-L-methionine = 2'-O-methyluridine(2552) in 23S rRNA + S-adenosyl-L-homocysteine + H(+). Specifically methylates the uridine in position 2552 of 23S rRNA at the 2'-O position of the ribose in the fully assembled 50S ribosomal subunit. This is Ribosomal RNA large subunit methyltransferase E from Cupriavidus metallidurans (strain ATCC 43123 / DSM 2839 / NBRC 102507 / CH34) (Ralstonia metallidurans).